Consider the following 238-residue polypeptide: 5'-deoxynucleotidase YBR242W (238 aa).

One can recognise an HD domain in the interval 77 to 183; the sequence is ISDHMYRLSI…VKDIDKYEML (107 aa). Residues H80, H108, D109, E112, D117, I118, and D178 each contribute to the a divalent metal cation site.

Belongs to the HDDC2 family. As to quaternary structure, homodimer. Mn(2+) is required as a cofactor. Co(2+) serves as cofactor. Requires Mg(2+) as cofactor.

It carries out the reaction a 2'-deoxyribonucleoside 5'-phosphate + H2O = a 2'-deoxyribonucleoside + phosphate. In terms of biological role, catalyzes the dephosphorylation of the nucleoside 5'-monophosphates deoxyadenosine monophosphate (dAMP), deoxycytidine monophosphate (dCMP), deoxyguanosine monophosphate (dGMP) and deoxythymidine monophosphate (dTMP). This Saccharomyces cerevisiae (strain ATCC 204508 / S288c) (Baker's yeast) protein is 5'-deoxynucleotidase YBR242W.